A 598-amino-acid polypeptide reads, in one-letter code: Nuclear receptor subfamily 4 group A member 2 (598 aa).

The segment at 1-22 (MPCVQAQYGSSPQGASPASQSY) is disordered. Residues 8–22 (YGSSPQGASPASQSY) are compositionally biased toward low complexity. The segment at residues 260–335 (EGLCAVCGDN…VGMVKEVVRT (76 aa)) is a DNA-binding region (nuclear receptor). NR C4-type zinc fingers lie at residues 263–283 (CAVC…CEGC) and 299–318 (CLAN…CQYC). Residues 287-314 (FKRTVQKNAKYVCLANKNCPVDKRRRNR) carry the Bipartite nuclear localization signal (NLS1) motif. Residues 337–361 (SLKGRRGRLPSKPKSPQEPSPPSPP) are disordered. The Nuclear localization signal (NLS1) motif lies at 338–350 (LKGRRGRLPSKPK). The span at 352–361 (PQEPSPPSPP) shows a compositional bias: pro residues. One can recognise an NR LBD domain in the interval 360-595 (PPVSLISALV…AIIDKLFLDT (236 aa)). The short motif at 443–452 (FLELFVLRLA) is the nuclear export sequence (NES1) element. Residues 568 to 577 (QGLQRIFYLK) carry the nuclear export sequence (NES2) motif.

Belongs to the nuclear hormone receptor family. NR4 subfamily. In terms of assembly, interacts with SFPQ, NCOR2, SIN3A and HADC1. The interaction with NCOR2 increases in the absence of PITX3. Interacts with PER2.

The protein localises to the cytoplasm. It is found in the nucleus. Functionally, transcriptional regulator which is important for the differentiation and maintenance of meso-diencephalic dopaminergic (mdDA) neurons during development. It is crucial for expression of a set of genes such as SLC6A3, SLC18A2, TH and DRD2 which are essential for development of mdDA neurons. This chain is Nuclear receptor subfamily 4 group A member 2 (NR4A2), found in Bos taurus (Bovine).